We begin with the raw amino-acid sequence, 116 residues long: Large ribosomal subunit protein bL19 (116 aa).

It belongs to the bacterial ribosomal protein bL19 family.

In terms of biological role, this protein is located at the 30S-50S ribosomal subunit interface and may play a role in the structure and function of the aminoacyl-tRNA binding site. In Histophilus somni (strain 129Pt) (Haemophilus somnus), this protein is Large ribosomal subunit protein bL19.